The following is a 1310-amino-acid chain: MSVTTNAVADAFAVFDVTPDPDELARKNKKPDDSGSVTVRQLYRYANWLDLILLAVGIFGSIGCGVLTPCQMLVMGDMVDTFNTNDLMKAFPNQEAMYDPKYYIPFNHEVTKTVADTINDLVLKMVCFAIGSGVGSFLMTFCFFVMSERQGIKIRMLYFRALLRQDAGWYDFHESGELTSRIASDVQQIQDGMSQKFGIIFQTTTSFIAGYAIGFAKDWDLTLVIMSMSPFIVLSMTLLAVFATKFTVLGEESLGNAGAIAEATIGNMRTVHSLGQEHEFCEMYNEKIRVVDRYNVLKGLTVGLGLGAVMFFIMGAFSLGSWYASVVLRGKGGKKNVTAGDVMIVFICVLIATQGLSIIAIPLNIFATAKASAYRIYQTIDRIPDIDCRSTAGECPTECNGNITLEDVQFRYPTRPTKQILGGLDLEIKKGQTVALVGASGCGKSTTIQLVQRNYDPVGGSVKLDGKDLRDLNIKWLRNQIGLVGQEPILFACTIRENIMLGARDGETPTEEEMIECAKMANAHEFISHLPEGYDTMVGEKGAALSGGQKQRIAIARALIRKPTILLLDEATSALDTQSEKIVQQALEKASQGRTTIVVAHRLTTVRNASRICVFHQGEIIEQGTHQELMDLKGTYYGLVKRQSMEEEVDQETVENDLKKIREQENKEAEEINQHKNTDTNEDPDIVQKLENEYNSEMKKLKHSNRFVLLRVILDNFRHEWFLSTFGFIGGIGGGAIFPFFTLKIVDLIMCLLSINSDTLTDDQKDTIKNICIIVVVIGVASFLSFFMYIGLFLSAGFKMIGRVRKDMYHSIMHQNISWFDRKENMVGSLTTRLASDPTTLQGISGERVGNVIHIISTIGFALGIAFYYDWKVSLAVMAVSPVLIVVVFINGKLNSLEACPAQAAYEKSGITLVEAVESVRTVQSLTREEHFYEVFKDALREPKIGIYKWAPLLSIFMCLTTLLTQVMNPYGFYIGTYLIKKKSNYDLPVPDFMIEFSDRFEEMQKAIMAVIFAAQAVGNLGNIVPDIGKAVRAAKNTYDVIDRKPTIDCYSEEGETFNDVKGEIEFKDICFRYPTRPDNSVLKGISFKVEQGKTVALVGASGCGKSTSVQLIERFYDPTHGDVLLDGHNIKDLNIHFLRSQIGMVGQEPVLFAESVMDNIRRGVPKGVEVSNEQIYAAAKMANAHDFISAMPEGYNTMVGDRGAQISGGQKQRIAIARALIRNPKVLLLDEATSALDSESEKIVQDALDKAAKGRTTIVIAHRLSTIQNADQICVIMRGRIAERGTHQELLDLKGFYYTLAMQQFGTVD.

The next 5 helical transmembrane spans lie at 48–68 (WLDL…GVLT), 125–145 (MVCF…CFFV), 196–216 (KFGI…IGFA), 223–243 (LVIM…AVFA), and 299–319 (GLTV…AFSL). The ABC transmembrane type-1 1 domain maps to 55 to 368 (AVGIFGSIGC…IAIPLNIFAT (314 aa)). An N-linked (GlcNAc...) asparagine glycan is attached at asparagine 336. A helical membrane pass occupies residues 342 to 362 (VMIVFICVLIATQGLSIIAIP). The N-linked (GlcNAc...) asparagine glycan is linked to asparagine 402. Positions 403 to 642 (ITLEDVQFRY…KGTYYGLVKR (240 aa)) constitute an ABC transporter 1 domain. An ATP-binding site is contributed by 438–445 (GASGCGKS). Asparagine 608 carries an N-linked (GlcNAc...) asparagine glycan. 2 helical membrane-spanning segments follow: residues 721–741 (WFLS…FPFF) and 773–793 (IIVV…IGLF). The ABC transmembrane type-1 2 domain occupies 722 to 1030 (FLSTFGFIGG…LGNIVPDIGK (309 aa)). A glycan (N-linked (GlcNAc...) asparagine) is linked at asparagine 816. Helical transmembrane passes span 849–869 (VGNV…AFYY), 871–891 (WKVS…VFIN), and 945–965 (IGIY…TLLT). The 240-residue stretch at 1065–1304 (IEFKDICFRY…KGFYYTLAMQ (240 aa)) folds into the ABC transporter 2 domain. 1100–1107 (GASGCGKS) provides a ligand contact to ATP.

It belongs to the ABC transporter superfamily. ABCB family. Multidrug resistance exporter (TC 3.A.1.201) subfamily.

It is found in the membrane. The enzyme catalyses ATP + H2O + xenobioticSide 1 = ADP + phosphate + xenobioticSide 2.. Its function is as follows. Energy-dependent efflux pump responsible for decreased drug accumulation in multidrug resistance parasites. The protein is Multidrug resistance protein 4 of Entamoeba histolytica (strain ATCC 30459 / HM-1:IMSS / ABRM).